The primary structure comprises 856 residues: DNA mismatch repair protein MutS (856 aa).

618 to 625 is an ATP binding site; sequence GPNMGGKS.

This sequence belongs to the DNA mismatch repair MutS family.

This protein is involved in the repair of mismatches in DNA. It is possible that it carries out the mismatch recognition step. This protein has a weak ATPase activity. The protein is DNA mismatch repair protein MutS of Shewanella baltica (strain OS185).